Reading from the N-terminus, the 583-residue chain is GTP diphosphokinase CRSH1, chloroplastic (583 aa).

Residues Met1 to Pro13 show a composition bias toward low complexity. The disordered stretch occupies residues Met1–Gly68. Residues Met1–Gly69 constitute a chloroplast transit peptide. The segment covering Arg19 to Arg39 has biased composition (basic residues). A compositionally biased stretch (low complexity) spans Leu40–Ala66. In terms of domain architecture, HD spans Ala119 to Met219. EF-hand domains lie at Gly473–Gly508 and Lys510–Met542. The Ca(2+) site is built by Asp486, Asn488, Asp490, Arg492, Glu497, Asp520, Asn522, Asp524, Ser526, and Glu531.

The protein belongs to the RelA/SpoT family. As to expression, expressed in roots and shoots.

It is found in the plastid. The protein resides in the chloroplast. It catalyses the reaction GTP + ATP = guanosine 3'-diphosphate 5'-triphosphate + AMP. Activated by calcium. Functionally, possesses calcium-dependent ppGpp (guanosine 3'-diphosphate 5'-diphosphate) synthetase activity in vitro and is able to functionally complement E.coli relA mutants. May be involved in a rapid plant ppGpp-mediated response to pathogens and other stresses. In Oryza sativa subsp. japonica (Rice), this protein is GTP diphosphokinase CRSH1, chloroplastic.